The primary structure comprises 224 residues: Phosphoglycolate phosphatase (224 aa).

Asp-11 acts as the Nucleophile in catalysis. Asp-11, Asp-13, and Asp-177 together coordinate Mg(2+).

Belongs to the HAD-like hydrolase superfamily. CbbY/CbbZ/Gph/YieH family. It depends on Mg(2+) as a cofactor.

The catalysed reaction is 2-phosphoglycolate + H2O = glycolate + phosphate. It participates in organic acid metabolism; glycolate biosynthesis; glycolate from 2-phosphoglycolate: step 1/1. Its function is as follows. Specifically catalyzes the dephosphorylation of 2-phosphoglycolate. Is involved in the dissimilation of the intracellular 2-phosphoglycolate formed during the DNA repair of 3'-phosphoglycolate ends, a major class of DNA lesions induced by oxidative stress. The sequence is that of Phosphoglycolate phosphatase from Haemophilus influenzae (strain 86-028NP).